A 200-amino-acid chain; its full sequence is Thymidylate kinase (200 aa).

10 to 17 serves as a coordination point for ATP; that stretch reads GIDGAGKS.

This sequence belongs to the thymidylate kinase family.

The catalysed reaction is dTMP + ATP = dTDP + ADP. Functionally, phosphorylation of dTMP to form dTDP in both de novo and salvage pathways of dTTP synthesis. In Cupriavidus metallidurans (strain ATCC 43123 / DSM 2839 / NBRC 102507 / CH34) (Ralstonia metallidurans), this protein is Thymidylate kinase.